We begin with the raw amino-acid sequence, 438 residues long: Ribosomal protein uS12 methylthiotransferase RimO (438 aa).

The MTTase N-terminal domain occupies 6 to 118 (KQLCLISLGC…IDILIAKKQN (113 aa)). Cys15, Cys49, Cys81, Cys150, Cys154, and Cys157 together coordinate [4Fe-4S] cluster. The Radical SAM core domain maps to 136–364 (TGSSVHAYVK…NKIALKHQHN (229 aa)).

This sequence belongs to the methylthiotransferase family. RimO subfamily. Requires [4Fe-4S] cluster as cofactor.

It is found in the cytoplasm. It carries out the reaction L-aspartate(89)-[ribosomal protein uS12]-hydrogen + (sulfur carrier)-SH + AH2 + 2 S-adenosyl-L-methionine = 3-methylsulfanyl-L-aspartate(89)-[ribosomal protein uS12]-hydrogen + (sulfur carrier)-H + 5'-deoxyadenosine + L-methionine + A + S-adenosyl-L-homocysteine + 2 H(+). Its function is as follows. Catalyzes the methylthiolation of an aspartic acid residue of ribosomal protein uS12. In Helicobacter acinonychis (strain Sheeba), this protein is Ribosomal protein uS12 methylthiotransferase RimO.